We begin with the raw amino-acid sequence, 213 residues long: Charged multivesicular body protein 2b (213 aa).

Position 2 is an N-acetylalanine (alanine 2). Positions 25–55 (QRAIIRDRAALEKQEKQLELEIKKMAKIGNK) form a coiled coil. A compositionally biased stretch (low complexity) spans 179 to 194 (AKAPSAARSLPSASTS). The tract at residues 179 to 199 (AKAPSAARSLPSASTSKATIS) is disordered. Serine 199 carries the post-translational modification Phosphoserine. The MIT-interacting motif signature appears at 201 to 211 (EEIERQLKALG).

This sequence belongs to the SNF7 family. In terms of assembly, probable core component of the endosomal sorting required for transport complex III (ESCRT-III). ESCRT-III components are thought to multimerize to form a flat lattice on the perimeter membrane of the endosome. Several assembly forms of ESCRT-III may exist that interact and act sequentially. Interacts with CHMP2A. Interacts with VPS4A. Interacts with VPS4B; the interaction is direct. In brain, it is expressed in all neuronal populations with a relatively enhanced expression in the hippocampus, frontal and temporal lobes and in both granule and Purkinje cells of the cerebellum. Not expressed in astrocytes or oligodendrocytes.

It is found in the cytoplasm. Its subcellular location is the cytosol. It localises to the late endosome membrane. Its function is as follows. Probable core component of the endosomal sorting required for transport complex III (ESCRT-III) which is involved in multivesicular bodies (MVBs) formation and sorting of endosomal cargo proteins into MVBs. MVBs contain intraluminal vesicles (ILVs) that are generated by invagination and scission from the limiting membrane of the endosome and mostly are delivered to lysosomes enabling degradation of membrane proteins, such as stimulated growth factor receptors, lysosomal enzymes and lipids. The MVB pathway appears to require the sequential function of ESCRT-O, -I,-II and -III complexes. ESCRT-III proteins mostly dissociate from the invaginating membrane before the ILV is released. The ESCRT machinery also functions in topologically equivalent membrane fission events, such as the terminal stages of cytokinesis. ESCRT-III proteins are believed to mediate the necessary vesicle extrusion and/or membrane fission activities, possibly in conjunction with the AAA ATPase VPS4. The polypeptide is Charged multivesicular body protein 2b (Chmp2b) (Mus musculus (Mouse)).